Reading from the N-terminus, the 1284-residue chain is Neuronal cell adhesion molecule (1284 aa).

The signal sequence occupies residues 1 to 24; it reads MMKEKSISASKASLVFFLCQMISA. Residues 25-1143 lie on the Extracellular side of the membrane; that stretch reads LDVPLDSKLL…ASRQVDIATQ (1119 aa). 6 consecutive Ig-like C2-type domains span residues 41–129, 136–230, 243–332, 337–424, 430–517, and 521–608; these read PTIT…AAIS, PSRS…QPIS, PPVL…ISVT, PYWI…AFVN, PRIL…VQLE, and PTMI…AVLT. Cystine bridges form between Cys-63/Cys-118 and Cys-162/Cys-213. Asn-78 is a glycosylation site (N-linked (GlcNAc...) asparagine). Asn-218 and Asn-290 each carry an N-linked (GlcNAc...) asparagine glycan. 2 cysteine pairs are disulfide-bonded: Cys-268/Cys-316 and Cys-358/Cys-408. N-linked (GlcNAc...) asparagine glycosylation is found at Asn-409, Asn-483, Asn-576, Asn-581, Asn-595, and Asn-692. 2 cysteine pairs are disulfide-bonded: Cys-452–Cys-501 and Cys-543–Cys-592. Fibronectin type-III domains follow at residues 625–720, 725–819, 824–926, 930–1026, and 1040–1132; these read PPLD…TKSA, NPSN…SGED, APGN…TPEG, PPSF…IMDE, and QPLY…TGPA. Polar residues predominate over residues 707 to 731; sequence QPSEPSEQYLTKSANPDENPSNVQG. Residues 707-732 form a disordered region; it reads QPSEPSEQYLTKSANPDENPSNVQGI. 9 N-linked (GlcNAc...) asparagine glycosylation sites follow: Asn-778, Asn-834, Asn-885, Asn-969, Asn-985, Asn-995, Asn-1048, Asn-1059, and Asn-1091. A helical membrane pass occupies residues 1144 to 1166; it reads GWFIGLMCAVALLILILLIVCFI. The Cytoplasmic segment spans residues 1167-1284; sequence RRNKGGKYPV…SPVNAMNSFV (118 aa). Composition is skewed to basic and acidic residues over residues 1175 to 1195, 1202 to 1212, and 1221 to 1230; these read PVKE…KEDD, RSLESDAEDHK, and PSDRTVKKED. The interval 1175-1284 is disordered; that stretch reads PVKEKEDAHA…SPVNAMNSFV (110 aa). A compositionally biased stretch (polar residues) spans 1268–1284; it reads NESSEAPSPVNAMNSFV.

Belongs to the immunoglobulin superfamily. L1/neurofascin/NgCAM family. In terms of assembly, heterodimer of an alpha and a beta chain. In terms of tissue distribution, retina and developing brain.

The protein localises to the cell membrane. This protein is a cell adhesion molecule involved in neuron-neuron adhesion, neurite fasciculation, outgrowth of neurites, etc. Specifically involved in the development of optic fibres in the retina. The polypeptide is Neuronal cell adhesion molecule (Gallus gallus (Chicken)).